The primary structure comprises 271 residues: Phosphatidylinositol transfer protein beta isoform (271 aa).

At Lys215 the chain carries N6-acetyllysine. A Phosphoserine modification is found at Ser262.

Belongs to the PtdIns transfer protein family. PI transfer class I subfamily. In terms of processing, constitutive phosphorylation of Ser-262 has no effect on phospholipid transfer activity but is required for Golgi targeting.

It localises to the golgi apparatus. The protein localises to the golgi apparatus membrane. It is found in the endoplasmic reticulum membrane. It catalyses the reaction a 1,2-diacyl-sn-glycero-3-phosphocholine(in) = a 1,2-diacyl-sn-glycero-3-phosphocholine(out). The enzyme catalyses a 1,2-diacyl-sn-glycero-3-phospho-(1D-myo-inositol)(in) = a 1,2-diacyl-sn-glycero-3-phospho-(1D-myo-inositol)(out). The catalysed reaction is an N-(acyl)-sphingosylphosphocholine(in) = an N-(acyl)-sphingosylphosphocholine(out). Functionally, catalyzes the transfer of phosphatidylinositol, phosphatidylcholine and sphingomyelin between membranes. Required for COPI-mediated retrograde transport from the Golgi to the endoplasmic reticulum; phosphatidylinositol and phosphatidylcholine transfer activity is essential for this function. The chain is Phosphatidylinositol transfer protein beta isoform (PITPNB) from Bos taurus (Bovine).